A 91-amino-acid polypeptide reads, in one-letter code: Small ribosomal subunit protein uS17 (91 aa).

The protein belongs to the universal ribosomal protein uS17 family. Part of the 30S ribosomal subunit.

Its function is as follows. One of the primary rRNA binding proteins, it binds specifically to the 5'-end of 16S ribosomal RNA. This is Small ribosomal subunit protein uS17 from Salinispora tropica (strain ATCC BAA-916 / DSM 44818 / JCM 13857 / NBRC 105044 / CNB-440).